An 86-amino-acid polypeptide reads, in one-letter code: MGEVVVILKIMPESPDVDLEKLQADIRAKVSGIEDMKVEPIGFGLSAIKIAMITEDDEGAGDKIEGLFSQIPGIDRTEIESLNRLL.

It belongs to the EF-1-beta/EF-1-delta family.

Promotes the exchange of GDP for GTP in EF-1-alpha/GDP, thus allowing the regeneration of EF-1-alpha/GTP that could then be used to form the ternary complex EF-1-alpha/GTP/AAtRNA. In Methanocorpusculum labreanum (strain ATCC 43576 / DSM 4855 / Z), this protein is Elongation factor 1-beta.